Consider the following 1127-residue polypeptide: MALKHQLNHAVEDNLGSKAPIGPCGFIYIYPETHFNFKEISLLGDKYAEAGAFSLPLLHGVTVEEAFVPNVKAVYKKIDMTTVSVKLSTFYNRAIIFHNVEKFESIFSGPGLGSLCKEACDLFGYVPFTPLGEGSTDVSDICPPVWQEKDAIMAVVITEGFKERLHLGKLIYLKSQMHSVMINKTEVYRIPLYDEDLFTKKSSLRRLYLPAVSEYLYYTLYTSLAQSLRVHNAASLVEAIQEQFVHDKYKMAKLVSFKEYPLATVGACDTTLMVIDAVAAELGLSYSLSFFEAPQEKTKVQDYYSWDIFASCETDSDRLEALSKWNALQAIHIHAQLFSTNSIYYVNRVARQAPIPNSKVEPNVYNSYYLQHGLANLCEETLFEDGSPAFTGAPASSLDGSSFTLQHLAYAAAFSPNLLARMCYYLQFCQHQKSTLNPAYNITEYVGSAANSPVCSLCSGQCPCVCINTLFYRLKDRFPPVLQGSRRDPYVITGITNVFNELDFLGNFASFRDKDEDQNQTEETPRYTYWQLNQTLTEKLEAAGLVDSPVADEGAGGSGSMNLEKFVRTFSDIDSLVDAEAAKFINTMIKNNVNFKESIKGVSHVIQYNCNTYWQAPCSLMLNLYYRSILTIIQDIALPISTVYESENPAQGYKPNEWLKLHYQTLWTNFKSFFIDKGVITGTEMKVVHAEQFSDFFDVDAATNNMYSPVKVQVRLARAQVLALKNIKVKNRILFSGTSMSEHYQNAFLKTANRRDNYILAGPYVKFLNSFHRQLFPNLKISCLYLWSNFCKKKQIPCVPGVSAEALNKFFSYINNNSKQFEEVNMLDVVPDSYVTYAKQRLNNAILRACGQTQFYAVTIHSIFPKVQETCALEYPHVLGTSSVDSVEDYVNNVQNLKALTVNSSLRESAANLARSRPIVTLPVVVNKYTGIAGNAQLFQSANLGYFMGRGVDKNLLGDSLFVKKQQNSYMRKKYLFMTPLVGNLLKPSYTHQGTAFEIETVKRTIQSILEDQADEDVLNRVVCELVKSLGAGCADLTLDDIQFYLGSYGMFSENILEKLDQLRELVGPWTHEWAESVLKSGTCETDEVQFVAFEEEQVKLTSMDHSGKVVGGKKRKIATMFDDLDL.

A required for nuclear localization region spans residues 1098-1127 (QVKLTSMDHSGKVVGGKKRKIATMFDDLDL).

The protein belongs to the herpesviridae major DNA-binding protein family. As to quaternary structure, homooligomers. Forms double-helical filaments necessary for the formation of replication compartments within the host nucleus. Interacts with the origin-binding protein. Interacts with the helicase primase complex; this interaction stimulates primer synthesis activity of the helicase-primase complex. Interacts with the DNA polymerase. Interacts with the alkaline exonuclease; this interaction increases its nuclease processivity.

It localises to the host nucleus. Plays several crucial roles in viral infection. Participates in the opening of the viral DNA origin to initiate replication by interacting with the origin-binding protein. May disrupt loops, hairpins and other secondary structures present on ssDNA to reduce and eliminate pausing of viral DNA polymerase at specific sites during elongation. Promotes viral DNA recombination by performing strand-transfer, characterized by the ability to transfer a DNA strand from a linear duplex to a complementary single-stranded DNA circle. Can also catalyze the renaturation of complementary single strands. Additionally, reorganizes the host cell nucleus, leading to the formation of prereplicative sites and replication compartments. This process is driven by the protein which can form double-helical filaments in the absence of DNA. The sequence is that of Major DNA-binding protein from Alcelaphine herpesvirus 1 (strain C500) (AlHV-1).